Consider the following 610-residue polypeptide: Synaptotagmin-like protein 3 (610 aa).

Residues 4–123 (EIDLSALKEL…IKTGEWFYEE (120 aa)) form the RabBD domain. A disordered region spans residues 219–239 (RQCVGQTERRSQSDTAVNVTT). 2 C2 domains span residues 306–428 (VTGE…TQSF) and 462–603 (RPRK…NLWT).

As to quaternary structure, monomer. Binds NRXN1. Binds RAB27A that has been activated by GTP-binding via its N-terminus.

The protein localises to the endomembrane system. Functionally, may act as Rab effector protein and play a role in vesicle trafficking. Binds phospholipids in the presence of calcium ions. This Homo sapiens (Human) protein is Synaptotagmin-like protein 3 (SYTL3).